Consider the following 357-residue polypeptide: Probable xyloglucan endotransglucosylase/hydrolase protein 29 (357 aa).

An N-terminal signal peptide occupies residues 1-31 (MRDSIYLLWIDNRLVVIIMMVMMVSCRCVLG). The GH16 domain occupies 32 to 232 (LENINPIFFD…YTFSPFVSEF (201 aa)). Glu-117 serves as the catalytic Nucleophile. The active-site Proton donor is Glu-121. Xyloglucan-binding positions include Glu-121 and 134-136 (QTN). An N-linked (GlcNAc...) asparagine glycan is attached at Asn-140. Xyloglucan-binding positions include 144 to 148 (NRGRE), 211 to 212 (SW), and Gly-216. Residues Asn-241 and Asn-262 are each glycosylated (N-linked (GlcNAc...) asparagine). The cysteines at positions 299 and 312 are disulfide-linked. A xyloglucan-binding site is contributed by Arg-304. Residues 326-357 (GRLKFGGSHPKVHKARKKRRRNRSTPVVSADL) form a disordered region. A compositionally biased stretch (basic residues) spans 335–348 (PKVHKARKKRRRNR). Asn-347 carries an N-linked (GlcNAc...) asparagine glycan.

The protein belongs to the glycosyl hydrolase 16 family. XTH group 3 subfamily. Contains at least one intrachain disulfide bond essential for its enzymatic activity.

The protein localises to the secreted. Its subcellular location is the cell wall. It is found in the extracellular space. It localises to the apoplast. The enzyme catalyses breaks a beta-(1-&gt;4) bond in the backbone of a xyloglucan and transfers the xyloglucanyl segment on to O-4 of the non-reducing terminal glucose residue of an acceptor, which can be a xyloglucan or an oligosaccharide of xyloglucan.. Functionally, catalyzes xyloglucan endohydrolysis (XEH) and/or endotransglycosylation (XET). Cleaves and religates xyloglucan polymers, an essential constituent of the primary cell wall, and thereby participates in cell wall construction of growing tissues. This is Probable xyloglucan endotransglucosylase/hydrolase protein 29 (XTH29) from Arabidopsis thaliana (Mouse-ear cress).